Here is a 124-residue protein sequence, read N- to C-terminus: Small ribosomal subunit protein uS12c (124 aa).

This sequence belongs to the universal ribosomal protein uS12 family. As to quaternary structure, part of the 30S ribosomal subunit.

It localises to the plastid. The protein localises to the chloroplast. Its function is as follows. With S4 and S5 plays an important role in translational accuracy. Located at the interface of the 30S and 50S subunits. The protein is Small ribosomal subunit protein uS12c (rps12) of Ostreococcus tauri.